The sequence spans 302 residues: Glycine--tRNA ligase alpha subunit (302 aa).

The protein belongs to the class-II aminoacyl-tRNA synthetase family. In terms of assembly, tetramer of two alpha and two beta subunits.

The protein resides in the cytoplasm. It catalyses the reaction tRNA(Gly) + glycine + ATP = glycyl-tRNA(Gly) + AMP + diphosphate. The polypeptide is Glycine--tRNA ligase alpha subunit (glyQ) (Haemophilus influenzae (strain ATCC 51907 / DSM 11121 / KW20 / Rd)).